The following is a 267-amino-acid chain: Neural/ectodermal development factor IMP-L2 (267 aa).

Residues Met-1–Gly-25 form the signal peptide. 2 consecutive Ig-like C2-type domains span residues Pro-48 to Tyr-149 and Pro-174 to Tyr-260. Disulfide bonds link Cys-80–Cys-139 and Cys-195–Cys-244.

Detected in several sites including the ventral neuroectoderm, the tracheal pits, the pharynx and esophagus, and specific neuronal cell bodies, where it is primarily expressed.

Its subcellular location is the secreted. The protein resides in the extracellular space. In terms of biological role, essential developmental role during embryogenesis, in particular the normal development of the nervous system. May be involved in some aspect of cell adhesion. The sequence is that of Neural/ectodermal development factor IMP-L2 (ImpL2) from Drosophila melanogaster (Fruit fly).